Here is an 86-residue protein sequence, read N- to C-terminus: Probable weak neurotoxin NNAM2 (86 aa).

An N-terminal signal peptide occupies residues 1 to 21 (MKTLLLTLVVVTIVCLDLGYT). Cystine bridges form between Cys-24–Cys-45, Cys-27–Cys-32, Cys-38–Cys-63, Cys-67–Cys-78, and Cys-79–Cys-84.

This sequence belongs to the three-finger toxin family. Ancestral subfamily. Orphan group II sub-subfamily. As to expression, expressed by the venom gland.

It localises to the secreted. Its function is as follows. Binds with low affinity to muscular (alpha-1-beta-1-delta-epsilon/CHRNA1-CHRNB1-CHRND-CHRNE) and very low affinity to neuronal (alpha-7/CHRNA7) nicotinic acetylcholine receptor (nAChR). This chain is Probable weak neurotoxin NNAM2, found in Naja atra (Chinese cobra).